The following is a 923-amino-acid chain: Phosphoenolpyruvate carboxylase (923 aa).

Catalysis depends on residues H149 and K585.

It belongs to the PEPCase type 1 family. Mg(2+) is required as a cofactor.

It carries out the reaction oxaloacetate + phosphate = phosphoenolpyruvate + hydrogencarbonate. In terms of biological role, forms oxaloacetate, a four-carbon dicarboxylic acid source for the tricarboxylic acid cycle. This chain is Phosphoenolpyruvate carboxylase, found in Nocardia farcinica (strain IFM 10152).